Here is a 719-residue protein sequence, read N- to C-terminus: CRAL-TRIO domain-containing protein T23G5.2 (719 aa).

In terms of domain architecture, PRELI/MSF1 spans 2 to 175; it reads VQTYRSPVRI…FIEELLKKTT (174 aa). A CRAL-TRIO domain is found at 319 to 495; the sequence is RPTVIKQYFP…FLGGSCLTTN (177 aa). Positions 524-681 constitute a GOLD domain; sequence HSTYTSTATW…KCRLIYYYEI (158 aa). A disordered region spans residues 700–719; the sequence is SSFSSIAPPTPPTPGTPRNP. Positions 707–719 are enriched in pro residues; that stretch reads PPTPPTPGTPRNP.

In Caenorhabditis elegans, this protein is CRAL-TRIO domain-containing protein T23G5.2.